Reading from the N-terminus, the 75-residue chain is UPF0235 protein Ava_3894 (75 aa).

Residues 1–32 (MQKKVKVKPNSKQQKIAEQDDGSLTVHLKSPP) are disordered.

This sequence belongs to the UPF0235 family.

This Trichormus variabilis (strain ATCC 29413 / PCC 7937) (Anabaena variabilis) protein is UPF0235 protein Ava_3894.